Reading from the N-terminus, the 246-residue chain is MKIDVLSLFPDMVQNGLSQSIIGKAIDRDLIDLEVTDFRDFSVNKHNSVDDAPYGGGAGMLLRPQPIFEAMDQVNAKNPGHKRVILLDPAGVTFNQKVAEEFAQEDHLVFICGHYEGYDERIRTLVTDEVSLGDFVVTGGELGAMVMIDAISRLVPGVLGNEQSAVTDSFSTGLLEHPQYTRPPEYRGLKVPEVLMNGNHKLINEWRDKMSLKRTYERRPDLLENFDLTADQQKWLREIKQETAEK.

Residues G113 and 132–137 contribute to the S-adenosyl-L-methionine site; that span reads LGDFVV.

The protein belongs to the RNA methyltransferase TrmD family. As to quaternary structure, homodimer.

The protein localises to the cytoplasm. The catalysed reaction is guanosine(37) in tRNA + S-adenosyl-L-methionine = N(1)-methylguanosine(37) in tRNA + S-adenosyl-L-homocysteine + H(+). In terms of biological role, specifically methylates guanosine-37 in various tRNAs. The protein is tRNA (guanine-N(1)-)-methyltransferase of Latilactobacillus sakei subsp. sakei (strain 23K) (Lactobacillus sakei subsp. sakei).